Consider the following 464-residue polypeptide: Kynureninase (464 aa).

At Met1 the chain carries N-acetylmethionine. Pyridoxal 5'-phosphate contacts are provided by residues Leu137, Thr138, 165–168, Ser221, Asp250, His253, and Tyr275; that span reads FPSD. Lys276 bears the N6-(pyridoxal phosphate)lysine mark. Positions 305 and 333 each coordinate pyridoxal 5'-phosphate.

The protein belongs to the kynureninase family. In terms of assembly, homodimer. The cofactor is pyridoxal 5'-phosphate. As to expression, high levels in liver and kidney. Also detected in heart, retina, ovary. Lung, testis and brain.

Its subcellular location is the cytoplasm. The protein localises to the cytosol. It carries out the reaction L-kynurenine + H2O = anthranilate + L-alanine + H(+). It catalyses the reaction 3-hydroxy-L-kynurenine + H2O = 3-hydroxyanthranilate + L-alanine + H(+). It participates in amino-acid degradation; L-kynurenine degradation; L-alanine and anthranilate from L-kynurenine: step 1/1. Its pathway is cofactor biosynthesis; NAD(+) biosynthesis; quinolinate from L-kynurenine: step 2/3. Inhibited by o-methylbenzoylalanine (OMBA). In terms of biological role, catalyzes the cleavage of L-kynurenine (L-Kyn) and L-3-hydroxykynurenine (L-3OHKyn) into anthranilic acid (AA) and 3-hydroxyanthranilic acid (3-OHAA), respectively. Has a preference for the L-3-hydroxy form. Also has cysteine-conjugate-beta-lyase activity. The sequence is that of Kynureninase (Kynu) from Rattus norvegicus (Rat).